The sequence spans 168 residues: Plasma membrane-associated cation-binding protein 2 (168 aa).

Gly-2 carries N-myristoyl glycine lipidation. Tandem repeats lie at residues 26–30 (VEEEK), 69–73 (VEEKK), 94–99 (VEEEKK), 103–107 (VEEKK), 110–115 (VEEEKK), 118–122 (VEEKK), and 124–129 (VEEEKK). The interval 26–129 (VEEEKPREVE…EKKPVEEEKK (104 aa)) is 7 X 5 AA approximate repeats of V-E-E-K-K. Residues 56-77 (EEIIATGEKEIEIVEEKKEEAK) adopt a coiled-coil conformation. Over residues 88 to 131 (EEKKPAVEEEKKTAPVEEKKPAVEEEKKPAVEEKKPVEEEKKEV) the composition is skewed to basic and acidic residues. A disordered region spans residues 88-168 (EEKKPAVEEE…ETPAAAPQKA (81 aa)). A compositionally biased stretch (low complexity) spans 152–168 (ETPAKAPETPAAAPQKA).

The protein belongs to the DREPP family. In terms of assembly, binds microtubules. Interacts with calcium ion Ca(2+), calmodulin and some phosphatidylinositol phosphates (PtdInsPs) such as phosphatidylinositol 3,5-bisphosphate [PtdIns(3,5)P(2)], PtdIns(4,5)P(2) and PtdIns(3,4,5)P(3). Cu(2+) is required as a cofactor. In terms of tissue distribution, mostly expressed in the expanding cells, specifically in roots (except in root tips) and flowers (at protein level). Also detected in cotyledons, hypocotyls and trichome stalks.

The protein localises to the cell membrane. It is found in the cytoplasm. Its subcellular location is the cytoskeleton. Its function is as follows. May be involved in intracellular signaling through interaction with PtdInsPs and calmodulin (CaM); may keep PtdInsPs attached to the plasma membrane until Ca(2+)-CaM reaches a competitive concentration subsequent to an increase triggered by a stimulus, thus leading to PtdInsPs release and subsequent activation of InsPs-dependent signaling cascade. Binds to microtubules and inhibits tubulin polymerization. Regulates directional cell growth and cortical microtubule organization by destabilizing microtubules (e.g. in cotyledon pavement cells). The chain is Plasma membrane-associated cation-binding protein 2 from Arabidopsis thaliana (Mouse-ear cress).